We begin with the raw amino-acid sequence, 557 residues long: TNF receptor-associated factor 5 (557 aa).

The segment at 45–85 adopts an RING-type zinc-finger fold; the sequence is CAFCHSVLHNPHQTGCGHRFCQHCILSLRELNTVPICPVDK. 2 consecutive TRAF-type zinc fingers follow at residues 127 to 181 and 182 to 239; these read DHLQ…INLQ and NHEE…RNLQ. Positions 237–342 form a coiled coil; sequence NLQQHEHSAL…VNQQQNKFDL (106 aa). Lys318 participates in a covalent cross-link: Glycyl lysine isopeptide (Lys-Gly) (interchain with G-Cter in ubiquitin). The interaction with EIF2AK2/PKR stretch occupies residues 345–557; sequence LMEAVDTVKQ…AVDLTDLEDL (213 aa). The 147-residue stretch at 403–549 folds into the MATH domain; the sequence is NGKLIWKVTD…DDTLFLKVAV (147 aa).

The protein belongs to the TNF receptor-associated factor family. A subfamily. Homotrimer. Heteromer with TRAF3. Associates with TNFRSF5/CD40 through interaction with TRAF3. Associates with LTBR/TNFRSF3, TNFRSF4, TNFRSF8/CD30, TNFRSF11A/RANK, TNFRSF13B/TACI, TNFRSF14, TNFRSF17, TNFRSF19/TROY, RIPK2, MAP3K14, MAP3K5, and TRAF and TNF receptor associated protein TDP2. Interacts (via C-terminus) with EIF2AK2/PKR (via the kinase catalytic domain). In terms of processing, ubiquitinated at Lys-318 by the SCF(FBXL2) complex, leading to its degradation by the proteasome. Expressed in spleen, thymus, prostate, testis, ovary, small intestine, colon, and peripheral blood.

The protein localises to the cytoplasm. It is found in the cytosol. Functionally, adapter protein and signal transducer that links members of the tumor necrosis factor receptor family to different signaling pathways by association with the receptor cytoplasmic domain and kinases. Mediates activation of NF-kappa-B and probably JNK. Seems to be involved in apoptosis. Plays a role in mediating activation of NF-kappa-B by EIF2AK2/PKR. The chain is TNF receptor-associated factor 5 (TRAF5) from Homo sapiens (Human).